Reading from the N-terminus, the 449-residue chain is Tubulin alpha-2 chain (449 aa).

GTP is bound at residue Gln-11. At Lys-40 the chain carries N6-acetyllysine. The GTP site is built by Glu-71, Ser-140, Gly-144, Thr-145, Thr-179, Asn-206, and Asn-228. Glu-71 contributes to the Mg(2+) binding site. The active site involves Glu-254.

This sequence belongs to the tubulin family. Dimer of alpha and beta chains. A typical microtubule is a hollow water-filled tube with an outer diameter of 25 nm and an inner diameter of 15 nM. Alpha-beta heterodimers associate head-to-tail to form protofilaments running lengthwise along the microtubule wall with the beta-tubulin subunit facing the microtubule plus end conferring a structural polarity. Microtubules usually have 13 protofilaments but different protofilament numbers can be found in some organisms and specialized cells. Requires Mg(2+) as cofactor. In terms of processing, undergoes a tyrosination/detyrosination cycle, the cyclic removal and re-addition of a C-terminal tyrosine residue by the enzymes tubulin tyrosine carboxypeptidase (TTCP) and tubulin tyrosine ligase (TTL), respectively. Post-translationally, acetylation of alpha chains at Lys-40 stabilizes microtubules and affects affinity and processivity of microtubule motors. This modification has a role in multiple cellular functions, ranging from cell motility, cell cycle progression or cell differentiation to intracellular trafficking and signaling. During the early stages of oogenesis lky/Alpha-tubulin N-acetyltransferase 2 is the main acetyltransferase responsible for Lys-40 acetylation in germline cells while Atat/alpha-tubulin N-acetyltransferase 1 is the main acetyltransferase responsible for Lys-40 acetylation in somatic cells.

The protein localises to the cytoplasm. The protein resides in the cytoskeleton. The catalysed reaction is GTP + H2O = GDP + phosphate + H(+). Functionally, tubulin is the major constituent of microtubules, a cylinder consisting of laterally associated linear protofilaments composed of alpha- and beta-tubulin heterodimers. Microtubules grow by the addition of GTP-tubulin dimers to the microtubule end, where a stabilizing cap forms. Below the cap, tubulin dimers are in GDP-bound state, owing to GTPase activity of alpha-tubulin. The chain is Tubulin alpha-2 chain (alphaTub85E) from Drosophila melanogaster (Fruit fly).